The sequence spans 245 residues: Outer dense fiber protein 1 (245 aa).

Phosphoserine occurs at positions 5 and 10. Residues 34 to 38 (RCLCD) form repeat 1. The tract at residues 34–78 (RCLCDLYMHPYCCCDLHPYPYCLCYSKRSRSCGLCDLYYPCCLCD) is 2 X 5 AA repeats of [RC]-C-L-C-D. At S64 the chain carries Phosphoserine. Repeat 2 spans residues 74–78 (CCLCD). A phosphoserine mark is found at S87, S108, S109, S137, S153, S175, and S180. Positions 195–233 (CNPCNPCSPCSPCGPCGPCGPCGPCGPCGPCDPCNPCYP) are C-X-P repeat region.

Interacts (via leucine zipper motif) with TCP11. Interacts with SPAG4. Interacts with KLC3. Interacts with CCDC42. In terms of tissue distribution, testis. Specifically located to the round spermatid layer and to the luminally-oriented cytoplasm of elongated spermatids.

Its subcellular location is the cell projection. The protein localises to the cilium. It localises to the flagellum. It is found in the cytoplasm. The protein resides in the cytoskeleton. Its subcellular location is the microtubule organizing center. The protein localises to the centrosome. In terms of biological role, component of the outer dense fibers (ODF) of spermatozoa. ODF are filamentous structures located on the outside of the axoneme in the midpiece and principal piece of the mammalian sperm tail and may help to maintain the passive elastic structures and elastic recoil of the sperm tail. The chain is Outer dense fiber protein 1 (Odf1) from Rattus norvegicus (Rat).